Consider the following 555-residue polypeptide: MKSLIGTLGLYCLFILTNNVVSSYGDDLYPLTIMHTNDFHARFEETNVKGNPCKSGEKCIGGLARVLHTIKKIIKEQEKKNIESLYINAGDNFQGTIWYNIGRWNVTSELMNIQPPDVMVLGNHEFDHGIDGLLPFLNNMDKTEIVVANMDARDEPQVAKKIKPFTIIKKKYRNIGVIGVVVEEVPDLANTGKLKFRNESEAILEAARNLKKEDPSVNIIIVVSHVGFDVDKIIAERTGSEVDIIVGGHSHTVLYTGTPPGPEKPEDNYPYVYNHPSGNKVLVVQAVCHAKYVGNLTVFFDKKGKVVTYEGAPIYMDTKVEQDKDVLEAMKPWRKLIDEKTKLVVGRTNVDLPRDICRSEECALGNLYTDSMIYAFGGKENCKSGSTWTTAPIAFVHAGAMRSSLHQGDILYSDALLLSPFTNMVVAYDLPGAQLKAALEFSAAPKNEDEKRRFLQMSGLKVTYNMSRAANNRIVDLKVRTNVCPYDQYENLDEKKTYRVVSPSFLQGGGDGFKMLRDYAKNIQNQKIDLDALVDYLKKFSPLAPKAEGRITIIH.

Residues 1–25 (MKSLIGTLGLYCLFILTNNVVSSYG) form the signal peptide. 3 residues coordinate a divalent metal cation: aspartate 38, histidine 40, and aspartate 91. An N-linked (GlcNAc...) asparagine glycan is attached at asparagine 105. Asparagine 123 lines the a divalent metal cation pocket. Asparagine 198 is a glycosylation site (N-linked (GlcNAc...) asparagine). The a divalent metal cation site is built by histidine 225 and histidine 249. Asparagine 295 carries N-linked (GlcNAc...) asparagine glycosylation. The AMP site is built by arginine 358, arginine 402, and phenylalanine 421. The N-linked (GlcNAc...) asparagine glycan is linked to asparagine 465. 2 residues coordinate AMP: phenylalanine 505 and aspartate 511.

The protein belongs to the 5'-nucleotidase family. It depends on Mg(2+) as a cofactor. The cofactor is Mn(2+). In terms of tissue distribution, salivary gland (at protein level). Saliva (at protein level).

The protein resides in the secreted. It carries out the reaction a ribonucleoside 5'-triphosphate + 2 H2O = a ribonucleoside 5'-phosphate + 2 phosphate + 2 H(+). Its activity is regulated as follows. DEPC (2 mM), sodium fluoride (10 mM) and 4,4'-Diisothiocyano-2,2'-stilbenedisulfonic acid (DIDS, 100 uM) nearly completely abrogate activity. Concanavalin A enhances activity. In terms of biological role, facilitates hematophagy by inhibiting ADP-dependent platelet aggregation and promoting disaggregation of ADP-stimulated platelets in the host. Cleaves adenosine triphosphate (ATP) and adenosine diphosphate (ADP) to adenosine monophosphate (AMP) and inorganic phosphate. Interacts with fibrinogen receptor integrin alpha-IIb/beta-3 (ITGA2B/ITGB3). The chain is 5'-nucleotidase-related protein from Glossina morsitans morsitans (Savannah tsetse fly).